Reading from the N-terminus, the 449-residue chain is Putative BTB/POZ domain-containing protein L742 (449 aa).

The BTB domain occupies 79–148 (EDGYVYINIG…LTMSNQELSG (70 aa)).

It belongs to the mimivirus BTB/WD family.

In Acanthamoeba polyphaga mimivirus (APMV), this protein is Putative BTB/POZ domain-containing protein L742.